A 160-amino-acid polypeptide reads, in one-letter code: MTKKKAYKPGSATIAQNKRARHEYFIEEEFEAGLSLQGWEVKSLRAGKANISDSYVTFRNGEAFLFGATITPLNVASTHVVCEPMRTRKLLLNKRELDSLIGKVNRDGFTVVALSVYWKNAWVKVKIGVAKGKKDHDKRDDIKDREWKLDKARIMKHANR.

Belongs to the SmpB family.

The protein localises to the cytoplasm. Functionally, required for rescue of stalled ribosomes mediated by trans-translation. Binds to transfer-messenger RNA (tmRNA), required for stable association of tmRNA with ribosomes. tmRNA and SmpB together mimic tRNA shape, replacing the anticodon stem-loop with SmpB. tmRNA is encoded by the ssrA gene; the 2 termini fold to resemble tRNA(Ala) and it encodes a 'tag peptide', a short internal open reading frame. During trans-translation Ala-aminoacylated tmRNA acts like a tRNA, entering the A-site of stalled ribosomes, displacing the stalled mRNA. The ribosome then switches to translate the ORF on the tmRNA; the nascent peptide is terminated with the 'tag peptide' encoded by the tmRNA and targeted for degradation. The ribosome is freed to recommence translation, which seems to be the essential function of trans-translation. The polypeptide is SsrA-binding protein (Yersinia enterocolitica serotype O:8 / biotype 1B (strain NCTC 13174 / 8081)).